A 151-amino-acid polypeptide reads, in one-letter code: Small ribosomal subunit protein uS19 (151 aa).

The interval 1-23 (MVVNKQGSVKSIKRKARKSRKVT) is disordered. Over residues 11-23 (SIKRKARKSRKVT) the composition is skewed to basic residues.

This sequence belongs to the universal ribosomal protein uS19 family.

In terms of biological role, protein S19 forms a complex with S13 that binds strongly to the 16S ribosomal RNA. In Thermoplasma volcanium (strain ATCC 51530 / DSM 4299 / JCM 9571 / NBRC 15438 / GSS1), this protein is Small ribosomal subunit protein uS19 (rps19).